A 334-amino-acid chain; its full sequence is Methionine adenosyltransferase 2 subunit beta (334 aa).

Residues 37-40 (TGLL), 60-62 (YSR), 71-72 (NL), C93, R97, Y159, and L185 contribute to the NADP(+) site. Residues 319-334 (LWPFLVDKRWRQTVFH) form a required for interaction with MAT2A region.

It belongs to the dTDP-4-dehydrorhamnose reductase family. MAT2B subfamily. As to quaternary structure, heterotrimer; composed of a catalytic mat2a homodimer that binds one regulatory mat2b chain. Heterohexamer; composed of a central, catalytic mat2a homotetramer flanked on either side by a regulatory mat2b chain. NADP binding increases the affinity for mat2a.

It participates in amino-acid biosynthesis; S-adenosyl-L-methionine biosynthesis; S-adenosyl-L-methionine from L-methionine: step 1/1. In terms of biological role, regulatory subunit of S-adenosylmethionine synthetase 2, an enzyme that catalyzes the formation of S-adenosylmethionine from methionine and ATP. Regulates MAT2A catalytic activity by changing its kinetic properties, increasing its affinity for L-methionine. Can bind NADP (in vitro). The sequence is that of Methionine adenosyltransferase 2 subunit beta (mat2b) from Xenopus tropicalis (Western clawed frog).